Reading from the N-terminus, the 211-residue chain is N-(5'-phosphoribosyl)anthranilate isomerase (211 aa).

This sequence belongs to the TrpF family.

The enzyme catalyses N-(5-phospho-beta-D-ribosyl)anthranilate = 1-(2-carboxyphenylamino)-1-deoxy-D-ribulose 5-phosphate. Its pathway is amino-acid biosynthesis; L-tryptophan biosynthesis; L-tryptophan from chorismate: step 3/5. The sequence is that of N-(5'-phosphoribosyl)anthranilate isomerase from Hyphomonas neptunium (strain ATCC 15444).